The sequence spans 432 residues: ATP-dependent RNA helicase RhlB (432 aa).

The Q motif signature appears at 9-37 (KKFSDFALHPKVIEALEKKGFSNCTQIQA). In terms of domain architecture, Helicase ATP-binding spans 40 to 219 (LPITVKGHDI…FEQMNNPEYV (180 aa)). 53–60 (AQTGTGKT) is a binding site for ATP. Residues 165–168 (DEAD) carry the DEAD box motif. In terms of domain architecture, Helicase C-terminal spans 245–390 (RLLQTLIEEE…VSKYNSDALL (146 aa)). The tract at residues 393 to 432 (LPEPKRRHRPRQGQPRRNNSAPRRGNNTQRNNRNKRPSHS) is disordered. Residues 404-423 (QGQPRRNNSAPRRGNNTQRN) are compositionally biased toward low complexity.

The protein belongs to the DEAD box helicase family. RhlB subfamily. As to quaternary structure, component of the RNA degradosome, which is a multiprotein complex involved in RNA processing and mRNA degradation.

Its subcellular location is the cytoplasm. The catalysed reaction is ATP + H2O = ADP + phosphate + H(+). Functionally, DEAD-box RNA helicase involved in RNA degradation. Has RNA-dependent ATPase activity and unwinds double-stranded RNA. The chain is ATP-dependent RNA helicase RhlB from Proteus mirabilis (strain HI4320).